A 311-amino-acid polypeptide reads, in one-letter code: Homoserine kinase (311 aa).

Residue 96-106 (PLARGLGSSAA) coordinates ATP.

This sequence belongs to the GHMP kinase family. Homoserine kinase subfamily.

The protein localises to the cytoplasm. The enzyme catalyses L-homoserine + ATP = O-phospho-L-homoserine + ADP + H(+). Its pathway is amino-acid biosynthesis; L-threonine biosynthesis; L-threonine from L-aspartate: step 4/5. Functionally, catalyzes the ATP-dependent phosphorylation of L-homoserine to L-homoserine phosphate. This chain is Homoserine kinase, found in Natranaerobius thermophilus (strain ATCC BAA-1301 / DSM 18059 / JW/NM-WN-LF).